The primary structure comprises 333 residues: Adenosine deaminase (333 aa).

2 residues coordinate Zn(2+): H12 and H14. Residues H14, D16, and G170 each coordinate substrate. H197 provides a ligand contact to Zn(2+). Catalysis depends on E200, which acts as the Proton donor. Residue D278 coordinates Zn(2+). D279 contributes to the substrate binding site.

Belongs to the metallo-dependent hydrolases superfamily. Adenosine and AMP deaminases family. Adenosine deaminase subfamily. Requires Zn(2+) as cofactor.

It catalyses the reaction adenosine + H2O + H(+) = inosine + NH4(+). The catalysed reaction is 2'-deoxyadenosine + H2O + H(+) = 2'-deoxyinosine + NH4(+). In terms of biological role, catalyzes the hydrolytic deamination of adenosine and 2-deoxyadenosine. This is Adenosine deaminase from Escherichia coli (strain SE11).